Consider the following 291-residue polypeptide: ATP synthase gamma chain (291 aa).

It belongs to the ATPase gamma chain family. In terms of assembly, F-type ATPases have 2 components, CF(1) - the catalytic core - and CF(0) - the membrane proton channel. CF(1) has five subunits: alpha(3), beta(3), gamma(1), delta(1), epsilon(1). CF(0) has three main subunits: a, b and c.

The protein resides in the cell inner membrane. Functionally, produces ATP from ADP in the presence of a proton gradient across the membrane. The gamma chain is believed to be important in regulating ATPase activity and the flow of protons through the CF(0) complex. The sequence is that of ATP synthase gamma chain from Pelagibacter ubique (strain HTCC1062).